Consider the following 502-residue polypeptide: T-complex protein 11-like X-linked protein 2 (502 aa).

The disordered stretch occupies residues 1–36 (MPKTEETVLQNDPSVAENGAPEPKTPGQSQKSKSFC).

This sequence belongs to the TCP11 family.

The chain is T-complex protein 11-like X-linked protein 2 from Homo sapiens (Human).